Reading from the N-terminus, the 931-residue chain is Isoleucine--tRNA ligase (931 aa).

The 'HIGH' region signature appears at Pro-58–His-68. Glu-559 provides a ligand contact to L-isoleucyl-5'-AMP. The short motif at Lys-600–Ser-604 is the 'KMSKS' region element. Lys-603 lines the ATP pocket. The Zn(2+) site is built by Cys-894, Cys-897, Cys-914, and Cys-917.

The protein belongs to the class-I aminoacyl-tRNA synthetase family. IleS type 1 subfamily. In terms of assembly, monomer. It depends on Zn(2+) as a cofactor.

It localises to the cytoplasm. The enzyme catalyses tRNA(Ile) + L-isoleucine + ATP = L-isoleucyl-tRNA(Ile) + AMP + diphosphate. Its function is as follows. Catalyzes the attachment of isoleucine to tRNA(Ile). As IleRS can inadvertently accommodate and process structurally similar amino acids such as valine, to avoid such errors it has two additional distinct tRNA(Ile)-dependent editing activities. One activity is designated as 'pretransfer' editing and involves the hydrolysis of activated Val-AMP. The other activity is designated 'posttransfer' editing and involves deacylation of mischarged Val-tRNA(Ile). The protein is Isoleucine--tRNA ligase of Legionella pneumophila (strain Corby).